Here is a 242-residue protein sequence, read N- to C-terminus: Putative pyrimidine-specific ribonucleoside hydrolase RihB (242 aa).

The substrate site is built by Gln156 and His168.

It belongs to the IUNH family. RihB subfamily.

The catalysed reaction is a pyrimidine ribonucleoside + H2O = a pyrimidine nucleobase + D-ribose. The protein is Putative pyrimidine-specific ribonucleoside hydrolase RihB (rihB) of Shigella boydii serotype 4 (strain Sb227).